The primary structure comprises 359 residues: Nicotinate-nucleotide--dimethylbenzimidazole phosphoribosyltransferase (359 aa).

Glutamate 318 serves as the catalytic Proton acceptor.

It belongs to the CobT family. As to quaternary structure, homodimer.

It catalyses the reaction 5,6-dimethylbenzimidazole + nicotinate beta-D-ribonucleotide = alpha-ribazole 5'-phosphate + nicotinate + H(+). It functions in the pathway nucleoside biosynthesis; alpha-ribazole biosynthesis; alpha-ribazole from 5,6-dimethylbenzimidazole: step 1/2. In terms of biological role, catalyzes the synthesis of alpha-ribazole-5'-phosphate from nicotinate mononucleotide (NAMN) and 5,6-dimethylbenzimidazole (DMB). This Escherichia coli (strain UTI89 / UPEC) protein is Nicotinate-nucleotide--dimethylbenzimidazole phosphoribosyltransferase.